We begin with the raw amino-acid sequence, 210 residues long: N-(5'-phosphoribosyl)anthranilate isomerase (210 aa).

The protein belongs to the TrpF family.

The catalysed reaction is N-(5-phospho-beta-D-ribosyl)anthranilate = 1-(2-carboxyphenylamino)-1-deoxy-D-ribulose 5-phosphate. It participates in amino-acid biosynthesis; L-tryptophan biosynthesis; L-tryptophan from chorismate: step 3/5. In Magnetococcus marinus (strain ATCC BAA-1437 / JCM 17883 / MC-1), this protein is N-(5'-phosphoribosyl)anthranilate isomerase.